The following is a 398-amino-acid chain: Succinyl-diaminopimelate desuccinylase (398 aa).

H68 is a binding site for Zn(2+). D70 is an active-site residue. D101 is a Zn(2+) binding site. The active-site Proton acceptor is E135. Zn(2+) contacts are provided by E136, E164, and H349.

It belongs to the peptidase M20A family. DapE subfamily. In terms of assembly, homodimer. Requires Zn(2+) as cofactor. The cofactor is Co(2+).

It catalyses the reaction N-succinyl-(2S,6S)-2,6-diaminopimelate + H2O = (2S,6S)-2,6-diaminopimelate + succinate. It functions in the pathway amino-acid biosynthesis; L-lysine biosynthesis via DAP pathway; LL-2,6-diaminopimelate from (S)-tetrahydrodipicolinate (succinylase route): step 3/3. Its function is as follows. Catalyzes the hydrolysis of N-succinyl-L,L-diaminopimelic acid (SDAP), forming succinate and LL-2,6-diaminopimelate (DAP), an intermediate involved in the bacterial biosynthesis of lysine and meso-diaminopimelic acid, an essential component of bacterial cell walls. This is Succinyl-diaminopimelate desuccinylase from Wolbachia pipientis wMel.